We begin with the raw amino-acid sequence, 139 residues long: Ribulose bisphosphate carboxylase small subunit (139 aa).

Belongs to the RuBisCO small chain family. As to quaternary structure, heterohexadecamer of 8 large and 8 small subunits.

It is found in the plastid. Its subcellular location is the chloroplast. Its function is as follows. RuBisCO catalyzes two reactions: the carboxylation of D-ribulose 1,5-bisphosphate, the primary event in carbon dioxide fixation, as well as the oxidative fragmentation of the pentose substrate in the photorespiration process. Both reactions occur simultaneously and in competition at the same active site. Although the small subunit is not catalytic it is essential for maximal activity. This is Ribulose bisphosphate carboxylase small subunit from Thalassiosira nordenskioeldii (Marine diatom).